The primary structure comprises 343 residues: C-X-C chemokine receptor type 6 (343 aa).

Topologically, residues 1–33 are extracellular; the sequence is MAEYDHYEDDEFFNSFNDSSQKEHQDFLQFSKV. The N-linked (GlcNAc...) asparagine glycan is linked to Asn-17. The helical transmembrane segment at 34 to 60 threads the bilayer; the sequence is FLPCMYLVVFVCGLVGNSLVLVISIFY. Residues 61–69 lie on the Cytoplasmic side of the membrane; sequence HKLQSLTDV. Residues 70–90 form a helical membrane-spanning segment; sequence FLVNLPLADLVFVCTLPFWAY. Residues 91 to 104 are Extracellular-facing; that stretch reads AGIHEWIFGQVMCK. Cys-103 and Cys-181 form a disulfide bridge. Residues 105–126 traverse the membrane as a helical segment; that stretch reads TLLGVYTINFYTSMLILTCITV. Topologically, residues 127–144 are cytoplasmic; the sequence is DRFIVVVKATKAYNQQAK. A helical transmembrane segment spans residues 145–165; the sequence is RMTWGKVICLLIWVISLLVSL. The Extracellular portion of the chain corresponds to 166–188; sequence PQIIYGNVFNLDKLICRYHDEEI. A helical membrane pass occupies residues 189 to 216; it reads STVVLATQMTLGFFLPLLTMIVCYSVII. The Cytoplasmic segment spans residues 217–232; sequence KTLLHAGGFQKHRSLK. A helical transmembrane segment spans residues 233-260; the sequence is IIFLVMAVFLLTQTPFNLVKLIRSTHWE. Residues 261–276 are Extracellular-facing; sequence YYAMTSFHYTIIVTEA. A helical membrane pass occupies residues 277–294; that stretch reads IAYLRACLNPVLYAFVSL. Residues 295-343 are Cytoplasmic-facing; the sequence is KFRKNFWKLVKDIGCLPYLGVSHQWKSSEDNSKTFSASHNVEATSMFQL.

Belongs to the G-protein coupled receptor 1 family.

It localises to the cell membrane. Receptor for the C-X-C chemokine CXCL16. Used as a coreceptor by SIVs and by strains of HIV-2 and m-tropic HIV-1. The protein is C-X-C chemokine receptor type 6 (CXCR6) of Cercocebus atys (Sooty mangabey).